The following is a 644-amino-acid chain: Core protein VP4 (644 aa).

Belongs to the orbivirus VP4 family.

It localises to the virion. Its function is as follows. The VP4 protein is one of the five proteins (with VP1, VP3, VP6 and VP7) which form the inner capsid of the virus. The polypeptide is Core protein VP4 (Segment-4) (Bluetongue virus 2 (isolate USA) (BTV 2)).